The sequence spans 165 residues: V-type proton ATPase subunit c2 (165 aa).

Over 1-12 the chain is Lumenal; that stretch reads MASTFSGDETAP. A helical membrane pass occupies residues 13–33; that stretch reads FFGFLGAAAALVFSCMGAAYG. Residues 34–55 are Cytoplasmic-facing; it reads TAKSGVGVASMGVMRPELVMKS. A helical transmembrane segment spans residues 56 to 76; it reads IVPVVMAGVLGIYGLIIAVII. The Lumenal segment spans residues 77–95; that stretch reads STGINPKAKSYYLFDGYAH. A helical membrane pass occupies residues 96-117; the sequence is LSSGLACGLAGLSAGMAIGIVG. The Cytoplasmic segment spans residues 118 to 129; that stretch reads DAGVRANAQQPK. The chain crosses the membrane as a helical span at residues 130–155; sequence LFVGMILILIFAEALALYGLIVGIIL. Residues 156–165 lie on the Lumenal side of the membrane; that stretch reads SSRAGQSRAE.

Belongs to the V-ATPase proteolipid subunit family. In terms of assembly, V-ATPase is a heteromultimeric enzyme composed of a peripheral catalytic V1 complex (components A to H) attached to an integral membrane V0 proton pore complex (components: a, c, c'', d and e). The proteolipid components c and c'' are present as a hexameric ring that forms the proton-conducting pore. As to expression, expressed in leaf, root, flower and silique, with lower expression in roots.

It localises to the vacuole membrane. Proton-conducting pore forming subunit of the membrane integral V0 complex of vacuolar ATPase. V-ATPase is responsible for acidifying a variety of intracellular compartments in eukaryotic cells. In Arabidopsis thaliana (Mouse-ear cress), this protein is V-type proton ATPase subunit c2 (VHA-c2).